Reading from the N-terminus, the 114-residue chain is Large ribosomal subunit protein uL22c (114 aa).

This sequence belongs to the universal ribosomal protein uL22 family. In terms of assembly, part of the 50S ribosomal subunit.

The protein localises to the plastid. Its subcellular location is the cyanelle. Functionally, this protein binds specifically to 23S rRNA. The globular domain of the protein is located near the polypeptide exit tunnel on the outside of the subunit, while an extended beta-hairpin is found that lines the wall of the exit tunnel in the center of the 70S ribosome. In Cyanophora paradoxa, this protein is Large ribosomal subunit protein uL22c (rpl22).